The sequence spans 661 residues: UvrABC system protein B (661 aa).

The Helicase ATP-binding domain maps to 25 to 182 (AGLSSKKRSQ…NDLINLQYER (158 aa)). 38–45 (GITGSGKT) is an ATP binding site. A Beta-hairpin motif is present at residues 91–114 (YYDYYQPEAYIARTDTFIEKDSSI). One can recognise a Helicase C-terminal domain in the interval 430-592 (QVEDLISEIQ…IIPKTINRAI (163 aa)). In terms of domain architecture, UVR spans 621 to 656 (KTHIDKLKKEMLKAASNLEFEQAVKLRDQLKTLEEA).

The protein belongs to the UvrB family. As to quaternary structure, forms a heterotetramer with UvrA during the search for lesions. Interacts with UvrC in an incision complex.

It is found in the cytoplasm. Its function is as follows. The UvrABC repair system catalyzes the recognition and processing of DNA lesions. A damage recognition complex composed of 2 UvrA and 2 UvrB subunits scans DNA for abnormalities. Upon binding of the UvrA(2)B(2) complex to a putative damaged site, the DNA wraps around one UvrB monomer. DNA wrap is dependent on ATP binding by UvrB and probably causes local melting of the DNA helix, facilitating insertion of UvrB beta-hairpin between the DNA strands. Then UvrB probes one DNA strand for the presence of a lesion. If a lesion is found the UvrA subunits dissociate and the UvrB-DNA preincision complex is formed. This complex is subsequently bound by UvrC and the second UvrB is released. If no lesion is found, the DNA wraps around the other UvrB subunit that will check the other stand for damage. The protein is UvrABC system protein B of Rickettsia rickettsii (strain Sheila Smith).